A 243-amino-acid chain; its full sequence is Uba3-binding protein but1 (243 aa).

Residues 28-50 (KSTKKRRSSTKDEETRGMHPHIK) are disordered.

As to quaternary structure, homodimer. Interacts with but2 and uba3.

Its subcellular location is the nucleus. In terms of biological role, acts as a negative regulator of the NEDD8 pathway. Has a role in meiosis. This Schizosaccharomyces pombe (strain 972 / ATCC 24843) (Fission yeast) protein is Uba3-binding protein but1 (but1).